The following is a 335-amino-acid chain: Probable pectinesterase 29 (335 aa).

Positions 1–24 (MGTHRIFIGLIALCCFCLPHLIEA) are cleaved as a signal peptide. A glycan (N-linked (GlcNAc...) asparagine) is linked at Asn43. Asp166 (proton donor) is an active-site residue. The Nucleophile role is filled by Asp187. Positions 248 and 250 each coordinate substrate. Asn262 carries an N-linked (GlcNAc...) asparagine glycan.

This sequence belongs to the pectinesterase family. In terms of tissue distribution, expressed in flower buds.

The protein resides in the secreted. It is found in the cell wall. It carries out the reaction [(1-&gt;4)-alpha-D-galacturonosyl methyl ester](n) + n H2O = [(1-&gt;4)-alpha-D-galacturonosyl](n) + n methanol + n H(+). It participates in glycan metabolism; pectin degradation; 2-dehydro-3-deoxy-D-gluconate from pectin: step 1/5. Functionally, acts in the modification of cell walls via demethylesterification of cell wall pectin. The protein is Probable pectinesterase 29 (PME29) of Arabidopsis thaliana (Mouse-ear cress).